Reading from the N-terminus, the 294-residue chain is Tetraspanin-15 (294 aa).

Residues 1–23 (MPRGDSEQVRYCARFSYLWLKFS) lie on the Cytoplasmic side of the membrane. Residues 24–44 (LIIYSTVFWLIGGLVLSVGIY) traverse the membrane as a helical segment. Residues 45–62 (AEAERQKYKTLESAFLAP) are Extracellular-facing. The chain crosses the membrane as a helical span at residues 63–83 (AIILILLGVVMFIVSFIGVLA). At 84–94 (SLRDNLCLLQS) the chain is on the cytoplasmic side. Residues 95-115 (FMYILGICLVMELIGGIVALI) form a helical membrane-spanning segment. At 116-235 (FRNQTIDFLN…WFMDNYTIMA (120 aa)) the chain is on the extracellular side. Asn-118 is a glycosylation site (N-linked (GlcNAc...) asparagine). Disulfide bonds link Cys-154-Cys-219, Cys-155-Cys-185, Cys-171-Cys-179, and Cys-186-Cys-198. 2 N-linked (GlcNAc...) asparagine glycosylation sites follow: Asn-189 and Asn-230. The chain crosses the membrane as a helical span at residues 236–256 (GLLLGILLPQFLGVLLTLLYI). Topologically, residues 257–294 (TRVEDIILEHSVTDGLLGPGAKSRTDTAGTGCCLCYPD) are cytoplasmic.

The protein belongs to the tetraspanin (TM4SF) family. In terms of assembly, interacts with ADAM10; the interaction influences ADAM10 substrate specificity, endocytosis and turnover. Palmitoylated.

The protein resides in the cell membrane. It localises to the late endosome membrane. Its function is as follows. Part of TspanC8 subgroup, composed of 6 members that interact with the transmembrane metalloprotease ADAM10. This interaction is required for ADAM10 exit from the endoplasmic reticulum and for enzymatic maturation and trafficking to the cell surface as well as substrate specificity. Different TspanC8/ADAM10 complexes have distinct substrates. Promotes ADAM10-mediated cleavage of CDH2. Negatively regulates ligand-induced Notch activity probably by regulating ADAM10 activity. This is Tetraspanin-15 (Tspan15) from Mus musculus (Mouse).